The sequence spans 206 residues: Bacterial microcompartment protein trimer-3 (206 aa).

BMC circularly permuted domains lie at 2-104 (ELRA…RLAP) and 105-206 (RVVS…DNRG). The Pore gating residues signature appears at 67–68 (ER).

Belongs to the EutL/PduB family. Homotrimerizes to form a pseudohexamer. These stack, with the concave faces together, with the concave faces together, in purified bacterial microcompartments (BMC).

Its subcellular location is the bacterial microcompartment. Its function is as follows. A minor component of the bacterial microcompartment (BMC) shell. Expression of 5 proteins in E.coli (BMC-H (Hoch_5815), BMC-P (Hoch_5814), and 3 BMC-T (Hoch_5812, Hoch_5816, Hoch_3341)) forms 40 nm artificial BMCs with a molecular mass of 6.5 MDa. One of 2 stacked pseudohexamers in the BMC. There are 20 BMC-T pseudohexamers per BMC, composed of mixed BMC-T1, BMC-T2 and BMC-T3. The shell facets are 20-30 Angstroms thick, with 1 of the stacked BMC-T trimers protruding to the exterior. The stacked trimers may serve as conduits to allow metabolite flux across the protein shell, gated by Arg-68 which contacts Glu-67 in an adjacent subunit; they are flexible enough to play a role in accommodating variations in shell assembly. The protein is Bacterial microcompartment protein trimer-3 of Haliangium ochraceum (strain DSM 14365 / JCM 11303 / SMP-2).